Reading from the N-terminus, the 122-residue chain is uncharacterized protein (122 aa).

The signal sequence occupies residues 1–18 (MYSMAFLASSGLVANSSA). Asn-15 is a glycosylation site (N-linked (GlcNAc...) asparagine).

This is an uncharacterized protein from Saccharomyces cerevisiae (strain ATCC 204508 / S288c) (Baker's yeast).